The following is a 527-amino-acid chain: Peptide chain release factor 3 (527 aa).

The region spanning 9 to 278 (DIRRTFAIIS…GLTQWAPKPQ (270 aa)) is the tr-type G domain. GTP contacts are provided by residues 18–25 (SHPDAGKT), 86–90 (DTPGH), and 140–143 (NKCD).

This sequence belongs to the TRAFAC class translation factor GTPase superfamily. Classic translation factor GTPase family. PrfC subfamily.

The protein localises to the cytoplasm. Functionally, increases the formation of ribosomal termination complexes and stimulates activities of RF-1 and RF-2. It binds guanine nucleotides and has strong preference for UGA stop codons. It may interact directly with the ribosome. The stimulation of RF-1 and RF-2 is significantly reduced by GTP and GDP, but not by GMP. The protein is Peptide chain release factor 3 of Shewanella denitrificans (strain OS217 / ATCC BAA-1090 / DSM 15013).